Here is a 219-residue protein sequence, read N- to C-terminus: Protein OPG170 (219 aa).

Positions 1-16 (MYSLVFVILMCIPFSF) are cleaved as a signal peptide. N-linked (GlcNAc...) asparagine; by host glycosylation is present at Asn70.

This sequence belongs to the orthopoxvirus OPG170 family.

It localises to the secreted. In terms of biological role, may interact with several cellular chemokines to interfere with chemokine-glycosaminoglycan (GAG) interactions at the cell surface to alter chemotaxis of nearby responsive cells. The sequence is that of Protein OPG170 (OPG170) from Bos taurus (Bovine).